Consider the following 381-residue polypeptide: cAMP-dependent protein kinase type I-alpha regulatory subunit (381 aa).

N-acetylmethionine is present on Met1. Ala2 is modified (N-acetylalanine; in cAMP-dependent protein kinase type I-alpha regulatory subunit, N-terminally processed). The segment at 2–136 (ASGSMATSEE…ALAKAIEKNV (135 aa)) is dimerization and phosphorylation. Ser3 is modified (phosphoserine). The tract at residues 73–96 (IRTDSREDEISPPPPNPVVKGRRR) is disordered. Phosphothreonine is present on Thr75. 2 positions are modified to phosphoserine: Ser77 and Ser83. A Pseudophosphorylation motif motif is present at residues 96-100 (RRGAI). Ser101 is subject to Phosphoserine. 3',5'-cyclic AMP contacts are provided by residues 137–254 (LFSH…SKVS), Glu202, Arg211, 255–381 (ILES…SLSV), Glu326, and Arg335. Ser258 is subject to Phosphoserine.

It belongs to the cAMP-dependent kinase regulatory chain family. In terms of assembly, the inactive holoenzyme is composed of two regulatory chains and two catalytic chains. Activation by cAMP releases the two active catalytic monomers and the regulatory dimer. Interacts with PRKACA and PRKACB. PRKAR1A also interacts with RFC2; the complex may be involved in cell survival. Interacts with AKAP4. Interacts with RARA; the interaction occurs in the presence of cAMP or FSH and regulates RARA transcriptional activity. Interacts with the phosphorylated form of PJA2. Interacts with PRKX; regulates this cAMP-dependent protein kinase. Interacts with CBFA2T3. Interacts with smAKAP; this interaction may target PRKAR1A to the plasma membrane. Interacts with AICDA. Post-translationally, the pseudophosphorylation site binds to the substrate-binding region of the catalytic chain, resulting in the inhibition of its activity.

Its subcellular location is the cell membrane. In terms of biological role, regulatory subunit of the cAMP-dependent protein kinases involved in cAMP signaling in cells. This Mus musculus (Mouse) protein is cAMP-dependent protein kinase type I-alpha regulatory subunit (Prkar1a).